Reading from the N-terminus, the 943-residue chain is Isoleucine--tRNA ligase (943 aa).

Positions 58-68 match the 'HIGH' region motif; it reads PYANGNIHIGH. Residue Glu567 coordinates L-isoleucyl-5'-AMP. The 'KMSKS' region motif lies at 608–612; the sequence is KMSKS. Lys611 serves as a coordination point for ATP. Residues Cys906, Cys909, Cys926, and Cys929 each coordinate Zn(2+).

This sequence belongs to the class-I aminoacyl-tRNA synthetase family. IleS type 1 subfamily. As to quaternary structure, monomer. It depends on Zn(2+) as a cofactor.

The protein localises to the cytoplasm. The catalysed reaction is tRNA(Ile) + L-isoleucine + ATP = L-isoleucyl-tRNA(Ile) + AMP + diphosphate. Catalyzes the attachment of isoleucine to tRNA(Ile). As IleRS can inadvertently accommodate and process structurally similar amino acids such as valine, to avoid such errors it has two additional distinct tRNA(Ile)-dependent editing activities. One activity is designated as 'pretransfer' editing and involves the hydrolysis of activated Val-AMP. The other activity is designated 'posttransfer' editing and involves deacylation of mischarged Val-tRNA(Ile). The polypeptide is Isoleucine--tRNA ligase (Pseudomonas savastanoi pv. phaseolicola (strain 1448A / Race 6) (Pseudomonas syringae pv. phaseolicola (strain 1448A / Race 6))).